We begin with the raw amino-acid sequence, 144 residues long: Protein BUD31 homolog (144 aa).

Positions proline 2–proline 10 match the Nuclear localization signal motif.

This sequence belongs to the BUD31 (G10) family.

The protein resides in the nucleus. The protein is Protein BUD31 homolog of Branchiostoma belcheri (Amphioxus).